The chain runs to 562 residues: Probable malate:quinone oxidoreductase (562 aa).

A disordered region spans residues 530-562; that stretch reads EVPDKSATPTDPTIAPKHQHSTTHNANSEMQAL. Over residues 551–562 the composition is skewed to polar residues; that stretch reads TTHNANSEMQAL.

Belongs to the MQO family. The cofactor is FAD.

It catalyses the reaction (S)-malate + a quinone = a quinol + oxaloacetate. It functions in the pathway carbohydrate metabolism; tricarboxylic acid cycle; oxaloacetate from (S)-malate (quinone route): step 1/1. The protein is Probable malate:quinone oxidoreductase of Xylella fastidiosa (strain M12).